The following is a 977-amino-acid chain: Probable UDP-N-acetylglucosamine--peptide N-acetylglucosaminyltransferase SEC (977 aa).

14 TPR repeats span residues 2-35, 53-86, 87-120, 121-154, 155-188, 189-222, 223-256, 257-290, 291-324, 325-358, 359-392, 393-426, 427-460, and 461-494; these read ISSK…SVSS, DDAR…NPLR, TDNL…QPQF, AECY…RPNF, ADAW…NPLL, VDAH…QPTF, AIAW…KPAF, PDAY…RPNS, AMAF…DPRF, LEAY…QPNH, PQAM…TTGL, SAPF…DPLA, ADAL…RPTM, and AEAH…RPDF. The interval 495 to 977 is catalytic region; that stretch reads PEATCNLLHT…ENDLEFPHDR (483 aa).

Belongs to the glycosyltransferase 41 family. O-GlcNAc transferase subfamily. As to quaternary structure, interacts with TCP14 and TCP15. Interacts with ATX1.

It carries out the reaction L-seryl-[protein] + UDP-N-acetyl-alpha-D-glucosamine = 3-O-(N-acetyl-beta-D-glucosaminyl)-L-seryl-[protein] + UDP + H(+). It catalyses the reaction L-threonyl-[protein] + UDP-N-acetyl-alpha-D-glucosamine = 3-O-(N-acetyl-beta-D-glucosaminyl)-L-threonyl-[protein] + UDP + H(+). Its pathway is protein modification; protein glycosylation. Its function is as follows. O-linked N-acetylglucosamine transferase (OGT) that mediates O-glycosylation of capsid protein (CP) of virus in case of infection by Plum pox virus. OGTs catalyze the addition of nucleotide-activated sugars directly onto the polypeptide through O-glycosidic linkage with the hydroxyl of serine or threonine. Probably acts by adding O-linked sugars to yet unknown proteins. Its OGT activity has been proved in vitro but not in vivo. Required with SPY for gamete and seed development. Mediates O-glycosylation of the DELLA protein RGA, a repressor of the gibberellin (GA) signaling pathway. O-glycosylation by SEC inhibits RGA binding to four of its interactors PIF3, PIF4, JAZ1, and BZR1 that are key regulators in light, jasmonate, and brassinosteroid signaling pathways, respectively. Activates ATX1 through O-GlcNAc modification to augment ATX1-mediated H3K4me3 histone epigenetic modification at FLC locus, thus preventing premature flowering. This Arabidopsis thaliana (Mouse-ear cress) protein is Probable UDP-N-acetylglucosamine--peptide N-acetylglucosaminyltransferase SEC.